The following is a 153-amino-acid chain: Ubiquitin/ISG15-conjugating enzyme E2 L6 (153 aa).

Residues methionine 2–valine 149 form the UBC core domain. Cysteine 86 serves as the catalytic Glycyl thioester intermediate.

It belongs to the ubiquitin-conjugating enzyme family. Interacts with RNF19A, RNF19B and RNF144B. Interacts with FLT3 (tyrosine phosphorylated). ISGylated.

It catalyses the reaction S-ubiquitinyl-[E1 ubiquitin-activating enzyme]-L-cysteine + [E2 ubiquitin-conjugating enzyme]-L-cysteine = [E1 ubiquitin-activating enzyme]-L-cysteine + S-ubiquitinyl-[E2 ubiquitin-conjugating enzyme]-L-cysteine.. It participates in protein modification; protein ubiquitination. In terms of biological role, catalyzes the covalent attachment of ubiquitin or ISG15 to other proteins. Functions in the E6/E6-AP-induced ubiquitination of p53/TP53. Promotes ubiquitination and subsequent proteasomal degradation of FLT3. This is Ubiquitin/ISG15-conjugating enzyme E2 L6 (Ube2l6) from Mus musculus (Mouse).